The sequence spans 454 residues: Zinc finger protein 474 (454 aa).

The tract at residues 48–85 (RGEKIKTNPRKNRPGTVILSKQSSRRIMSGSQPRPPVI) is disordered. Positions 66-79 (LSKQSSRRIMSGSQ) are enriched in polar residues. A C2HC/C3H-type 1 zinc finger spans residues 91–120 (GFRVCYICGREFGSQSLGIHEPQCLEKWRV). The Zn(2+) site is built by Cys-95, Cys-98, His-110, and Cys-114. The tract at residues 125-146 (LPKHLRRPEPSKPPPFSGSGSY) is disordered. 5 C2HC/C3H-type zinc fingers span residues 162–191 (QLLP…KVEG), 218–247 (RTVI…KWKV), 281–310 (QLVS…QPSG), 352–381 (PTIV…KWHN), and 425–454 (QLVP…KVAK). Zn(2+) contacts are provided by Cys-166, Cys-169, His-181, Cys-185, Cys-222, Cys-225, His-237, and Cys-241. Positions 256–282 (FRQPLPQKPQPLLTGQPKHAGPRQGQL) are disordered. 12 residues coordinate Zn(2+): Cys-285, Cys-288, His-300, Cys-304, Cys-356, Cys-359, His-371, Cys-375, Cys-429, Cys-432, His-444, and Cys-448. A disordered region spans residues 299-345 (VHQRSCKAQPSGPKVQDLTLGSRGGLKESTNPKPQRNMAAPPVTDKP).

It depends on Zn(2+) as a cofactor.

The polypeptide is Zinc finger protein 474 (ZNF474) (Bos taurus (Bovine)).